The chain runs to 754 residues: MAPNATGVLKRHRSHEKFDKKRDTKKHKHVEKTIVSNPSTDSPEESSIEAESEAMVYREPTQYQNLLVSLGSSNKVVADMNKRRQREEEGKSDTEEDEDDEDEDEEENSGSDDLSSTDGEDDKSQGDDQETLGGLTDDTQEDNDNQSEEEDPDDYETDEEVHELSTNGQSFVDASSSISAFSEHLSHKLSSEEVETLPKGKWKFKWESPAFDMPNCKWKGTSENFLDGIQSDAPYGLKPKLYNHWLQLYKKCGGKDLDSSKRRKFFSICNSYLDILHSNKKPFYHCGSDEDSSAMDAYLMHSLNHIFKTRDLVKKNESKIAKHRETSEEEILSDDGFLDQGFTRPKVLILLPLRSIAFRVVKRLIQLTPESQRVNVEHLDRFNDEFGCEEDTDDCDGEKTTSKNGNSIKQKSSKPSDWQALFGANNNDDEFMLGIKHTRKSIRLYGDFYSSDIIVASPLKLHMAIGAAEENKERDVDYLSSIEVLVIDHADIISMQNWSFLATVVDYLNRLPTKQHGTNVMRIRPLYLDGHARFYRQSIILSSYLTPEMNSLFGRHCLNYKGKMKMACEYKGVLEKVLLPVRQIYERFDAASITQVDDARLEYFTKKIFPKIKDSVQGGVMIFIHSYFEFVRLRNFLNTQNTSFCLLGDYAKNADISRAREQFFVGSRKIMLYTERAYFYKRYKIRGIKNLILYSLPERKEFYPEIMNMLEEGSHDMMSTALFSRFDMLQLERIVGSTSAKRMITSEKNMFAFC.

Disordered regions lie at residues 1 to 56 (MAPN…EAMV), 69 to 166 (SLGS…ELST), and 390 to 413 (EDTDDCDGEKTTSKNGNSIKQKSS). A compositionally biased stretch (acidic residues) spans 42–52 (SPEESSIEAES). Residues 80–93 (MNKRRQREEEGKSD) are compositionally biased toward basic and acidic residues. 2 stretches are compositionally biased toward acidic residues: residues 94–110 (TEEDEDDEDEDEEENSG) and 138–161 (DTQEDNDNQSEEEDPDDYETDEEV). The span at 402 to 413 (SKNGNSIKQKSS) shows a compositional bias: polar residues.

It belongs to the UTP25 family. In terms of assembly, component of the ribosomal small subunit (SSU) processome composed of at least 40 protein subunits and snoRNA U3. Interacts with THAL in the nucleus. As to expression, preferentially expressed in differentiating cells in young tissues such as floral buds, ovules, embryos, secondary roots, pollen, young seedlings and vascular bundles. Observed ubiquitously.

Its subcellular location is the nucleus. The protein localises to the nucleolus. In terms of biological role, DEAD-box RNA helicase-like protein required for pre-18S rRNA processing, specifically at sites A0, A1, and A2. Involved in the control of rRNA expression. Required for embryo development and female gametogenesis. The polypeptide is Protein NUCLEOLAR FACTOR 1 (Arabidopsis thaliana (Mouse-ear cress)).